We begin with the raw amino-acid sequence, 394 residues long: Ribulose bisphosphate carboxylase large chain (394 aa).

Position 5 is an N6,N6,N6-trimethyllysine (Lys5). 2 residues coordinate substrate: Asn114 and Thr164. Lys166 (proton acceptor) is an active-site residue. Lys168 contacts substrate. Mg(2+) is bound by residues Lys192, Asp194, and Glu195. Lys192 bears the N6-carboxylysine mark. Catalysis depends on His285, which acts as the Proton acceptor. The substrate site is built by Arg286, His318, and Ser370.

It belongs to the RuBisCO large chain family. Type I subfamily. As to quaternary structure, heterohexadecamer of 8 large chains and 8 small chains. Mg(2+) is required as a cofactor.

Its subcellular location is the plastid. It is found in the chloroplast. It carries out the reaction 2 (2R)-3-phosphoglycerate + 2 H(+) = D-ribulose 1,5-bisphosphate + CO2 + H2O. The enzyme catalyses D-ribulose 1,5-bisphosphate + O2 = 2-phosphoglycolate + (2R)-3-phosphoglycerate + 2 H(+). In terms of biological role, ruBisCO catalyzes two reactions: the carboxylation of D-ribulose 1,5-bisphosphate, the primary event in carbon dioxide fixation, as well as the oxidative fragmentation of the pentose substrate in the photorespiration process. Both reactions occur simultaneously and in competition at the same active site. In Victoria cruziana (Santa Cruz water lily), this protein is Ribulose bisphosphate carboxylase large chain (rbcL).